The primary structure comprises 260 residues: MSTTNDKLIIAGREFSSRLMVGTGKYASNEQMVAALEASGAEIITVAVRRVNITDRSKESLLDFIDTRKYTLLPNTAGCYTADDAVRTCRLAREAGMSDMVKLEVLGNETTLYPDNEELLKAAKILVKDGFTVLPYTSDDPIICKKLEDIGCAAVMPLGAPIGSGLGIRNPYTIRIIMETVKVPVIVDAGVGTASDAAIAMELGVDGVLMNTGIAGAQNPIAMAEAMNLAVRAGRLAYRAGRIPKKLYATASSPIEGMIE.

The Schiff-base intermediate with DXP role is filled by K102. Residues G163, 189–190, and 211–212 contribute to the 1-deoxy-D-xylulose 5-phosphate site; these read AG and NT.

The protein belongs to the ThiG family. In terms of assembly, homotetramer. Forms heterodimers with either ThiH or ThiS.

The protein localises to the cytoplasm. The enzyme catalyses [ThiS sulfur-carrier protein]-C-terminal-Gly-aminoethanethioate + 2-iminoacetate + 1-deoxy-D-xylulose 5-phosphate = [ThiS sulfur-carrier protein]-C-terminal Gly-Gly + 2-[(2R,5Z)-2-carboxy-4-methylthiazol-5(2H)-ylidene]ethyl phosphate + 2 H2O + H(+). It functions in the pathway cofactor biosynthesis; thiamine diphosphate biosynthesis. Its function is as follows. Catalyzes the rearrangement of 1-deoxy-D-xylulose 5-phosphate (DXP) to produce the thiazole phosphate moiety of thiamine. Sulfur is provided by the thiocarboxylate moiety of the carrier protein ThiS. In vitro, sulfur can be provided by H(2)S. This chain is Thiazole synthase, found in Geobacter metallireducens (strain ATCC 53774 / DSM 7210 / GS-15).